Here is a 114-residue protein sequence, read N- to C-terminus: Lymphotactin (114 aa).

The N-terminal stretch at 1–21 is a signal peptide; that stretch reads MRLLILALLGICSLTAYIVEG. Cys-32 and Cys-69 form a disulfide bridge. The segment at 91–114 is disordered; that stretch reads RNNMIQTKPTGTQQSTNTAVTLTG.

The protein belongs to the intercrine gamma family. In terms of tissue distribution, highest level in spleen, lower in peripheral leukocytes and very low levels in lung, colon and small intestine.

The protein resides in the secreted. In terms of biological role, chemotactic activity for lymphocytes but not for monocytes or neutrophils. In thymus, mediates medullary accumulation of thymic dendritic cells and contributes to regulatoy T cell development, playing a role in self-tolerance establishment. In Homo sapiens (Human), this protein is Lymphotactin (XCL1).